The following is a 298-amino-acid chain: Isochorismatase domain-containing protein 1 (298 aa).

Tyrosine 160 bears the Phosphotyrosine mark. Lysine 279 is modified (N6-succinyllysine).

This sequence belongs to the isochorismatase family.

This is Isochorismatase domain-containing protein 1 (ISOC1) from Bos taurus (Bovine).